We begin with the raw amino-acid sequence, 323 residues long: 4-hydroxy-3-methylbut-2-enyl diphosphate reductase (323 aa).

[4Fe-4S] cluster is bound at residue Cys-13. The (2E)-4-hydroxy-3-methylbut-2-enyl diphosphate site is built by His-42 and His-75. Dimethylallyl diphosphate is bound by residues His-42 and His-75. Isopentenyl diphosphate-binding residues include His-42 and His-75. Cys-97 is a [4Fe-4S] cluster binding site. His-125 is a binding site for (2E)-4-hydroxy-3-methylbut-2-enyl diphosphate. Dimethylallyl diphosphate is bound at residue His-125. Residue His-125 participates in isopentenyl diphosphate binding. Glu-127 serves as the catalytic Proton donor. Thr-168 lines the (2E)-4-hydroxy-3-methylbut-2-enyl diphosphate pocket. A [4Fe-4S] cluster-binding site is contributed by Cys-198. The (2E)-4-hydroxy-3-methylbut-2-enyl diphosphate site is built by Ser-226, Ser-227, Asn-228, and Ser-270. Ser-226, Ser-227, Asn-228, and Ser-270 together coordinate dimethylallyl diphosphate. Residues Ser-226, Ser-227, Asn-228, and Ser-270 each contribute to the isopentenyl diphosphate site.

This sequence belongs to the IspH family. [4Fe-4S] cluster is required as a cofactor.

It catalyses the reaction isopentenyl diphosphate + 2 oxidized [2Fe-2S]-[ferredoxin] + H2O = (2E)-4-hydroxy-3-methylbut-2-enyl diphosphate + 2 reduced [2Fe-2S]-[ferredoxin] + 2 H(+). The enzyme catalyses dimethylallyl diphosphate + 2 oxidized [2Fe-2S]-[ferredoxin] + H2O = (2E)-4-hydroxy-3-methylbut-2-enyl diphosphate + 2 reduced [2Fe-2S]-[ferredoxin] + 2 H(+). It participates in isoprenoid biosynthesis; dimethylallyl diphosphate biosynthesis; dimethylallyl diphosphate from (2E)-4-hydroxy-3-methylbutenyl diphosphate: step 1/1. It functions in the pathway isoprenoid biosynthesis; isopentenyl diphosphate biosynthesis via DXP pathway; isopentenyl diphosphate from 1-deoxy-D-xylulose 5-phosphate: step 6/6. In terms of biological role, catalyzes the conversion of 1-hydroxy-2-methyl-2-(E)-butenyl 4-diphosphate (HMBPP) into a mixture of isopentenyl diphosphate (IPP) and dimethylallyl diphosphate (DMAPP). Acts in the terminal step of the DOXP/MEP pathway for isoprenoid precursor biosynthesis. This is 4-hydroxy-3-methylbut-2-enyl diphosphate reductase from Nitrosomonas europaea (strain ATCC 19718 / CIP 103999 / KCTC 2705 / NBRC 14298).